An 88-amino-acid chain; its full sequence is Stannin (88 aa).

Over 1–10 (MSIMDHSPTT) the chain is Mitochondrial intermembrane. Residues 11–31 (GVVTVIVILIAIAALGALILG) form a helical membrane-spanning segment. At 32 to 88 (CWCYLRLQRISQSEDEESIVGDGETKEPFLLVQYSAKGPCVERKAKLMTPNGPEVHG) the chain is on the cytoplasmic side. S49 bears the Phosphoserine mark.

Belongs to the stannin family. Monomer.

Its subcellular location is the mitochondrion outer membrane. Plays a role in the toxic effects of organotins. Plays a role in endosomal maturation. The polypeptide is Stannin (SNN) (Homo sapiens (Human)).